Consider the following 270-residue polypeptide: Phosphatidylglycerol--prolipoprotein diacylglyceryl transferase (270 aa).

4 consecutive transmembrane segments (helical) span residues 19–39 (FPVYWYGVIIGTGVLLGLWLA), 54–74 (IDLVLIAVPIAILFARMYYVI), 92–112 (QGGLAIHGGLIGAVITGILFA), and 116–136 (GLSFWKLADIAAPSILLGQAI). Residue Arg138 coordinates a 1,2-diacyl-sn-glycero-3-phospho-(1'-sn-glycerol). A run of 3 helical transmembrane segments spans residues 178–198 (HPTFLYESLWNFAGVILLLAL), 206–226 (GELFFTYLIWYSVGRFFVEGL), and 236–256 (LRIAQVMSIGIVVISIIFIIV).

It belongs to the Lgt family.

The protein localises to the cell membrane. The catalysed reaction is L-cysteinyl-[prolipoprotein] + a 1,2-diacyl-sn-glycero-3-phospho-(1'-sn-glycerol) = an S-1,2-diacyl-sn-glyceryl-L-cysteinyl-[prolipoprotein] + sn-glycerol 1-phosphate + H(+). Its pathway is protein modification; lipoprotein biosynthesis (diacylglyceryl transfer). In terms of biological role, catalyzes the transfer of the diacylglyceryl group from phosphatidylglycerol to the sulfhydryl group of the N-terminal cysteine of a prolipoprotein, the first step in the formation of mature lipoproteins. In Bacillus mycoides (strain KBAB4) (Bacillus weihenstephanensis), this protein is Phosphatidylglycerol--prolipoprotein diacylglyceryl transferase.